A 1258-amino-acid polypeptide reads, in one-letter code: Non-secreted LysM effector LysM19 (1258 aa).

Residues 148 to 168 (VTQSLPNISSHEKRDDHEGNS) are disordered. Residues 157–168 (SHEKRDDHEGNS) are compositionally biased toward basic and acidic residues. LysM domains lie at 1028–1073 (IVYT…SICL) and 1179–1227 (RWHV…AYCT).

Belongs to the secreted LysM effector family.

In terms of biological role, non-secreted LysM effector that might be involved in manipulation of host defenses for successful infection. The polypeptide is Non-secreted LysM effector LysM19 (Penicillium expansum (Blue mold rot fungus)).